The sequence spans 456 residues: Glycerol-3-phosphate acyltransferase 4 (456 aa).

Residues 1-37 (MFLLLPFDSLIVNLLGISLTVLFTLLLVFIIVPAIFG) form the signal peptide. 2 helical membrane passes run 156–176 (ISLR…CFLL) and 180–200 (IALA…VGYL). A glycan (N-linked (GlcNAc...) asparagine) is linked at Asn247. The HXXXXD motif motif lies at 248 to 253 (HTSPID). N-linked (GlcNAc...) asparagine glycosylation is found at Asn327, Asn328, and Asn362.

It belongs to the 1-acyl-sn-glycerol-3-phosphate acyltransferase family. Highly expressed in testis.

It is found in the endoplasmic reticulum membrane. The enzyme catalyses sn-glycerol 3-phosphate + an acyl-CoA = a 1-acyl-sn-glycero-3-phosphate + CoA. It catalyses the reaction dodecanoyl-CoA + sn-glycerol 3-phosphate = 1-dodecanoyl-sn-glycerol 3-phosphate + CoA. The catalysed reaction is sn-glycerol 3-phosphate + hexadecanoyl-CoA = 1-hexadecanoyl-sn-glycero-3-phosphate + CoA. It carries out the reaction sn-glycerol 3-phosphate + octadecanoyl-CoA = 1-octadecanoyl-sn-glycero-3-phosphate + CoA. The enzyme catalyses sn-glycerol 3-phosphate + (9Z)-octadecenoyl-CoA = 1-(9Z-octadecenoyl)-sn-glycero-3-phosphate + CoA. It catalyses the reaction (9Z,12Z)-octadecadienoyl-CoA + sn-glycerol 3-phosphate = 1-(9Z,12Z)-octadecadienoyl-sn-glycero-3-phosphate + CoA. It participates in phospholipid metabolism; CDP-diacylglycerol biosynthesis; CDP-diacylglycerol from sn-glycerol 3-phosphate: step 1/3. Its function is as follows. Converts glycerol-3-phosphate to 1-acyl-sn-glycerol-3-phosphate (lysophosphatidic acid or LPA) by incorporating an acyl moiety at the sn-1 position of the glycerol backbone. Active against both saturated and unsaturated long-chain fatty acyl-CoAs. Protects cells against lipotoxicity. The polypeptide is Glycerol-3-phosphate acyltransferase 4 (Mus musculus (Mouse)).